The sequence spans 262 residues: Global transcriptional regulator CodY (262 aa).

Positions 1 to 159 (MAHLLEKTRK…ASTVVGIQLL (159 aa)) are GAF domain. Residues 207-226 (ASVIADRIGITRSVIVNALR) constitute a DNA-binding region (H-T-H motif).

It belongs to the CodY family.

The protein resides in the cytoplasm. Functionally, DNA-binding global transcriptional regulator which is involved in the adaptive response to starvation and acts by directly or indirectly controlling the expression of numerous genes in response to nutrient availability. During rapid exponential growth, CodY is highly active and represses genes whose products allow adaptation to nutrient depletion. The sequence is that of Global transcriptional regulator CodY from Streptococcus pneumoniae serotype 4 (strain ATCC BAA-334 / TIGR4).